The primary structure comprises 448 residues: Adenylosuccinate synthetase (448 aa).

Residues Gly22–Lys28 and Gly50–Thr52 each bind GTP. Asp23 acts as the Proton acceptor in catalysis. The Mg(2+) site is built by Asp23 and Gly50. IMP-binding positions include Asp23–Lys26, Asn48–His51, Thr139, Arg153, Gln234, Thr249, and Arg321. His51 acts as the Proton donor in catalysis. Substrate is bound at residue Ser317 to Arg323. Residues Arg323, Lys349–Asp351, and Ser431–Gly433 contribute to the GTP site.

Belongs to the adenylosuccinate synthetase family. As to quaternary structure, homodimer. It depends on Mg(2+) as a cofactor.

Its subcellular location is the cytoplasm. The catalysed reaction is IMP + L-aspartate + GTP = N(6)-(1,2-dicarboxyethyl)-AMP + GDP + phosphate + 2 H(+). It participates in purine metabolism; AMP biosynthesis via de novo pathway; AMP from IMP: step 1/2. Its function is as follows. Plays an important role in the de novo pathway of purine nucleotide biosynthesis. Catalyzes the first committed step in the biosynthesis of AMP from IMP. The protein is Adenylosuccinate synthetase of Paraburkholderia phymatum (strain DSM 17167 / CIP 108236 / LMG 21445 / STM815) (Burkholderia phymatum).